The chain runs to 155 residues: MASATTSDHAKQAGGAHSRQRDSGLLDQLGKLFGQEGSRKVPEKGKEPATRSVLMAPTTHKAHQGARRQTDDSPVVHFFKNMMSPKKAPVQQKAKSGASRAITKFIWGTDGQRAHYGAAGSSKSKDGFRGRRDGSGTLSSFFKMGKKGEGSPARR.

Residues 1-72 (MASATTSDHA…HQGARRQTDD (72 aa)) are disordered. Residue alanine 2 is modified to N-acetylalanine; in forms C1, C2, C3 and C8. Glutamine 12 is modified (deamidated glutamine; in forms C1, C2 and C3). Basic and acidic residues predominate over residues 37 to 49 (GSRKVPEKGKEPA). Phosphoserine; in forms C1, C2 and C3 is present on residues serine 73 and serine 84. The tract at residues 113 to 155 (RAHYGAAGSSKSKDGFRGRRDGSGTLSSFFKMGKKGEGSPARR) is disordered. Residues serine 121 and serine 122 each carry the phosphoserine; in forms C1 and C3 modification. Basic and acidic residues predominate over residues 123–134 (KSKDGFRGRRDG). Phosphoserine; in forms C1, C2 and C3 is present on residues serine 135, serine 139, and serine 140.

It belongs to the myelin basic protein family. In terms of processing, several charge isomers are produced as a result of optional post-translational modifications, such as phosphorylation, deamidation and citrullination. Dogfish MBP contains four major components designated as C1, C2, C3 and C8. C1 and C3, but not C2 are phosphorylated at either Ser-121 or Ser-122; C2 is phosphorylated at 2 or 3 sites among Ser-135, Ser-139 and Ser-140. Hydroxyproline and citrulline are present but were not identified in either C1, C2 or C3, which suggests their presence in C8.

It localises to the myelin membrane. Its function is as follows. This protein may function to maintain proper structure of myelin. This is Myelin basic protein (MBP) from Squalus acanthias (Spiny dogfish).